Here is a 257-residue protein sequence, read N- to C-terminus: Spindlin-2C (257 aa).

Positions 1–47 are disordered; the sequence is MKTPHKKGAAKEQMGEGVGHHIGSTTIKKKKASQKRQRSRSSSRRSI. The span at 27 to 43 shows a compositional bias: basic residues; that stretch reads IKKKKASQKRQRSRSSS. 3 tudor-like domain regions span residues 48–97, 127–176, and 208–253; these read VGCR…LELH, IGKA…YQLL, and IGKH…YDLV. Histone H3K4me3 and H3R8me2a binding stretches follow at residues glutamate 136 and 244-246; that span reads DFH.

Belongs to the SPIN/STSY family. Interacts with C11orf84/SPINDOC.

It is found in the nucleus. In terms of biological role, may be involved in the regulation of cell cycle progression. Exhibits H3K4me3-binding activity. The chain is Spindlin-2C (Spin2c) from Mus musculus (Mouse).